The sequence spans 608 residues: Chaperone protein HtpG (608 aa).

The a; substrate-binding stretch occupies residues 1–332 (MQFQTEVNQL…VEDLPLNVSR (332 aa)). The interval 333–536 (EILQENQILK…KNKPDFAMQQ (204 aa)) is b. The c stretch occupies residues 537–608 (LLKQMGQEQN…LTKIINKAFS (72 aa)).

The protein belongs to the heat shock protein 90 family. As to quaternary structure, homodimer.

The protein localises to the cytoplasm. Its function is as follows. Molecular chaperone. Has ATPase activity. This Campylobacter jejuni subsp. jejuni serotype O:6 (strain 81116 / NCTC 11828) protein is Chaperone protein HtpG.